Here is a 276-residue protein sequence, read N- to C-terminus: Small ribosomal subunit protein uS3 (276 aa).

One can recognise a KH type-2 domain in the interval 39–110 (IRRETMKFFK…KINIKIKEIK (72 aa)). A disordered region spans residues 218–243 (DAGQVINRKSSREKSEHFDRSRVDDR). A compositionally biased stretch (basic and acidic residues) spans 227 to 243 (SSREKSEHFDRSRVDDR).

Belongs to the universal ribosomal protein uS3 family. As to quaternary structure, part of the 30S ribosomal subunit. Forms a tight complex with proteins S10 and S14.

Binds the lower part of the 30S subunit head. Binds mRNA in the 70S ribosome, positioning it for translation. The polypeptide is Small ribosomal subunit protein uS3 (Borrelia hermsii (strain HS1 / DAH)).